Reading from the N-terminus, the 601-residue chain is COP9 signalosome complex subunit 1 (601 aa).

The span at 1 to 10 (MQNELLDDPM) shows a compositional bias: acidic residues. Disordered regions lie at residues 1 to 54 (MQNE…LDNP) and 268 to 294 (DADD…PYMV). Over residues 14 to 24 (APAAEAAAADE) the composition is skewed to low complexity. Residues 338-500 (TILQIKTECL…GIVRILDERD (163 aa)) enclose the PCI domain. Residues 535–581 (SISDKETRPKRKNQKESAKFDRNFGGIDVDEDPRGIAGPSGLSDDFN) form a disordered region.

The protein belongs to the CSN1 family. As to quaternary structure, component of the CSN complex, probably composed of csn-1, csn-2, csn-3, csn-4, csn-5, csn-6 and csn-7. Within the complex it probably interacts directly with csn-2, csn-4 and csn-5. May interact with itself. Interacts with rbx-1.

It is found in the cytoplasm. It localises to the nucleus. Functionally, essential component of the COP9 signalosome complex (CSN), a complex involved in various cellular and developmental processes. The CSN complex is an essential regulator of the ubiquitin (Ubl) conjugation pathway by mediating the deneddylation of the cullin subunits of the SCF-type E3 ligase complexes, leading to decrease the Ubl ligase activity of SCF. The CSN complex plays an essential role in embryogenesis and oogenesis and is required to regulate microtubule stability in the early embryo. Mediates mei-3/katanin targeting for degradation at the meiosis to mitosis transition via deneddylation of cul-3. The polypeptide is COP9 signalosome complex subunit 1 (csn-1) (Caenorhabditis elegans).